The following is a 184-amino-acid chain: PXMP2/4 family protein 3 (184 aa).

A signal peptide spans 1 to 44; that stretch reads MSNSKPLSLTDAVTTWYMKKLKSKPIQTKALTSATLSFISSVVA. A run of 3 helical transmembrane segments spans residues 58–78, 97–117, and 159–179; these read VVKFTVWGLISSPLVHYWHII, IVDQLVFAPFINIAFYSVLAI, and LRVLFGNLVGFCWGIYLSILA.

It belongs to the peroxisomal membrane protein PXMP2/4 family.

The protein localises to the membrane. The chain is PXMP2/4 family protein 3 from Dictyostelium discoideum (Social amoeba).